Reading from the N-terminus, the 389-residue chain is Very-long-chain 3-oxoacyl-CoA reductase (389 aa).

The helical transmembrane segment at 34-54 (IAVFLLAIGLFHVALKVVSYV) threads the bilayer. 7 residues coordinate NADP(+): Val-80, Asp-134, Asn-162, Tyr-239, Lys-243, Val-272, and Ser-274. Tyr-239 (proton donor) is an active-site residue. Lys-243 functions as the Lowers pKa of active site Tyr in the catalytic mechanism. The segment at 359–389 (QAAGGVADPKNTTAAREGYATESLKNETLKH) is disordered.

It belongs to the short-chain dehydrogenases/reductases (SDR) family.

Its subcellular location is the endoplasmic reticulum membrane. It catalyses the reaction a very-long-chain (3R)-3-hydroxyacyl-CoA + NADP(+) = a very-long-chain 3-oxoacyl-CoA + NADPH + H(+). It participates in lipid metabolism; fatty acid biosynthesis. In terms of biological role, component of the microsomal membrane bound fatty acid elongation system, which produces the 26-carbon very long-chain fatty acids (VLCFA) from palmitate. Catalyzes the reduction of the 3-ketoacyl-CoA intermediate that is formed in each cycle of fatty acid elongation. VLCFAs serve as precursors for ceramide and sphingolipids. The sequence is that of Very-long-chain 3-oxoacyl-CoA reductase from Yarrowia lipolytica (strain CLIB 122 / E 150) (Yeast).